Reading from the N-terminus, the 215-residue chain is UPF0502 protein PP_2442 (215 aa).

The protein belongs to the UPF0502 family.

The protein is UPF0502 protein PP_2442 of Pseudomonas putida (strain ATCC 47054 / DSM 6125 / CFBP 8728 / NCIMB 11950 / KT2440).